The chain runs to 186 residues: Methylamine dehydrogenase light chain (186 aa).

The segment at residues 1 to 57 is a signal peptide (tat-type signal); the sequence is MLGKSQFDDLFEKMSRKVAGHTSRRGFIGRVGTAVAGVALVPLLPVDRRGRVSRANA. 6 disulfides stabilise this stretch: C78-C143, C84-C116, C91-C176, C93-C141, C101-C132, and C133-C164. The residue at position 112 (W112) is a Tryptophylquinone. The segment at residues 112-163 is a cross-link (tryptophan tryptophylquinone (Trp-Trp)); the sequence is WVASCYNPTDKQSYLISYRDCCGANVSGRCACLNTEGELPVYRPEFGNDIIW.

Belongs to the aromatic amine dehydrogenase light chain family. As to quaternary structure, heterotetramer of two light and two heavy chains. The cofactor is tryptophan tryptophylquinone residue. Post-translationally, predicted to be exported by the Tat system. The position of the signal peptide cleavage has been experimentally proven. In terms of processing, tryptophan tryptophylquinone (TTQ) is formed by oxidation of the indole ring of a tryptophan to form tryptophylquinone followed by covalent cross-linking with another tryptophan residue.

It is found in the periplasm. It carries out the reaction 2 oxidized [amicyanin] + methylamine + H2O = 2 reduced [amicyanin] + formaldehyde + NH4(+) + 2 H(+). It participates in one-carbon metabolism; methylamine degradation; formaldehyde from methylamine: step 1/1. In terms of biological role, methylamine dehydrogenase carries out the oxidation of methylamine. Electrons are passed from methylamine dehydrogenase to amicyanin. This is Methylamine dehydrogenase light chain (mauA) from Methylorubrum extorquens (strain ATCC 14718 / DSM 1338 / JCM 2805 / NCIMB 9133 / AM1) (Methylobacterium extorquens).